We begin with the raw amino-acid sequence, 118 residues long: Protein Rev (118 aa).

Residues Ser-5 and Ser-8 each carry the phosphoserine; by host CK2 modification. Positions 18–26 (LIKFLYQSN) are homomultimerization. Positions 23–46 (YQSNPPPSPEGTRQARRNRRRRWR) are disordered. Residues 34–50 (TRQARRNRRRRWRARQR) carry the Nuclear localization signal and RNA-binding (RRE) motif. Residues 36–46 (QARRNRRRRWR) are compositionally biased toward basic residues. The Nuclear export signal and binding to XPO1 motif lies at 73–84 (LQLPPLERLNLN). Positions 87–118 (EDCRTSGTQGVGHPQISVESPTVLESGTEEQC) are disordered. Ser-92 is subject to Phosphoserine; by host. Over residues 103-112 (SVESPTVLES) the composition is skewed to polar residues.

This sequence belongs to the HIV-1 REV protein family. As to quaternary structure, homomultimer; when bound to the RRE. Multimeric assembly is essential for activity and may involve XPO1. Binds to human KPNB1, XPO1, TNPO1, RANBP5 and IPO7. Interacts with the viral Integrase. Interacts with human KHDRBS1. Interacts with human NAP1; this interaction decreases Rev multimerization and stimulates its activity. Interacts with human DEAD-box helicases DDX3 and DDX24; these interactions may serve for viral RNA export to the cytoplasm and packaging, respectively. Interacts with human PSIP1; this interaction may inhibit HIV-1 DNA integration by promoting dissociation of the Integrase-LEDGF/p75 complex. Post-translationally, asymmetrically arginine dimethylated at one site by host PRMT6. Methylation impairs the RNA-binding activity and export of viral RNA from the nucleus to the cytoplasm. In terms of processing, phosphorylated by protein kinase CK2. Presence of, and maybe binding to the N-terminus of the regulatory beta subunit of CK2 is necessary for CK2-mediated Rev's phosphorylation.

Its subcellular location is the host nucleus. It is found in the host nucleolus. It localises to the host cytoplasm. Functionally, escorts unspliced or incompletely spliced viral pre-mRNAs (late transcripts) out of the nucleus of infected cells. These pre-mRNAs carry a recognition sequence called Rev responsive element (RRE) located in the env gene, that is not present in fully spliced viral mRNAs (early transcripts). This function is essential since most viral proteins are translated from unspliced or partially spliced pre-mRNAs which cannot exit the nucleus by the pathway used by fully processed cellular mRNAs. Rev itself is translated from a fully spliced mRNA that readily exits the nucleus. Rev's nuclear localization signal (NLS) binds directly to KPNB1/Importin beta-1 without previous binding to KPNA1/Importin alpha-1. KPNB1 binds to the GDP bound form of RAN (Ran-GDP) and targets Rev to the nucleus. In the nucleus, the conversion from Ran-GDP to Ran-GTP dissociates Rev from KPNB1 and allows Rev's binding to the RRE in viral pre-mRNAs. Rev multimerization on the RRE via cooperative assembly exposes its nuclear export signal (NES) to the surface. Rev can then form a complex with XPO1/CRM1 and Ran-GTP, leading to nuclear export of the complex. Conversion from Ran-GTP to Ran-GDP mediates dissociation of the Rev/RRE/XPO1/RAN complex, so that Rev can return to the nucleus for a subsequent round of export. Beside KPNB1, also seems to interact with TNPO1/Transportin-1, RANBP5/IPO5 and IPO7/RANBP7 for nuclear import. The nucleoporin-like HRB/RIP is an essential cofactor that probably indirectly interacts with Rev to release HIV RNAs from the perinuclear region to the cytoplasm. The polypeptide is Protein Rev (Human immunodeficiency virus type 1 group M subtype D (isolate ELI) (HIV-1)).